The primary structure comprises 1475 residues: Nuclear pore complex protein Nup153 (1475 aa).

Gly residues predominate over residues 1–15 (MASGAGGVGGGGGGK). 3 disordered regions span residues 1–37 (MASGAGGVGGGGGGKIRTRRCHQGPIKPYQQGRQQHQ), 90–124 (DEESSNITDGRITPEPAVSNTEEPSTTSTASNYPD), and 171–225 (DSTS…TATS). An N-acetylalanine modification is found at A2. T102 is modified (phosphothreonine). Composition is skewed to polar residues over residues 107–121 (VSNTEEPSTTSTASN) and 181–190 (ISTTSGFSSR). 5 positions are modified to phosphoserine: S182, S185, S192, S203, and S209. Repeat 1 spans residues 236–237 (FG). The interval 236-1418 (FGTLSPSLGN…NSPSGVFTFG (1183 aa)) is 29 X 2 AA repeats of F-G. S240, S257, S297, S320, S330, S333, S334, S338, and S343 each carry phosphoserine. Residue K353 forms a Glycyl lysine isopeptide (Lys-Gly) (interchain with G-Cter in SUMO2) linkage. T369 is modified (phosphothreonine). At K384 the chain carries N6-acetyllysine. T388 carries the post-translational modification Phosphothreonine. 5 positions are modified to phosphoserine: S500, S516, S518, S522, and S529. O-linked (GlcNAc) serine glycans are attached at residues S534 and S544. T588 bears the Phosphothreonine mark. Residues S607, S614, S619, and S633 each carry the phosphoserine modification. Residues 652–653 (FG) form repeat 2. The RanBP2-type 1 zinc-finger motif lies at 657 to 687 (KAGSSWQCDTCLLQNKVTDNKCIACQAAKLS). Positions 664, 667, 678, and 681 each coordinate Zn(2+). Position 687 is a phosphoserine (S687). Repeat 3 spans residues 715–716 (FG). N6-acetyllysine is present on K718. Residues 722 to 751 (VIGTWDCDTCLVQNKPEAIKCVACETPKPG) form a RanBP2-type 2 zinc finger. Zn(2+) is bound by residues C728, C731, C742, and C745. The stretch at 786 to 787 (FG) is repeat 4. RanBP2-type zinc fingers lie at residues 793–822 (PIGSWECSVCCVSNNAEDNKCVSCMSEKPG) and 851–880 (PEGSWDCELCLVQNKADSTKCLACESAKPG). Zn(2+) contacts are provided by C799, C802, C813, C816, C857, C860, C871, and C874. A Phosphoserine modification is found at S891. Copy 5 of the repeat occupies 905–906 (FG). O-linked (GlcNAc) serine glycans are attached at residues S908 and S909. Repeat unit 6 spans residues 926-927 (FG). The residue at position 954 (K954) is an N6-acetyllysine. 5 tandem repeats follow at residues 961–962 (FG), 983–984 (FG), 1000–1001 (FG), 1024–1025 (FG), and 1084–1085 (FG). The O-linked (GlcNAc) serine glycan is linked to S1113. Tandem repeats lie at residues 1118–1119 (FG) and 1135–1136 (FG). The interval 1128-1167 (KCQPVFSFGNSEQTKDENSSKSTFSFSMTKPSEKESEQPA) is disordered. The segment covering 1147–1157 (SKSTFSFSMTK) has biased composition (low complexity). O-linked (GlcNAc) threonine glycosylation is present at T1156. 11 repeat units span residues 1173–1174 (FG), 1212–1213 (FG), 1228–1229 (FG), 1240–1241 (FG), 1275–1276 (FG), 1289–1290 (FG), 1291–1292 (FG), 1306–1307 (FG), 1319–1320 (FG), 1327–1328 (FG), and 1341–1342 (FG). Positions 1311 to 1402 (SAPSASPAFG…SAFQFGSSTT (92 aa)) are disordered. Positions 1321 to 1335 (ANQTPTFGQSQGASQ) are enriched in polar residues. Polar residues-rich tracts occupy residues 1343 to 1356 (SISSSTALFPTGSQ) and 1363 to 1396 (GTVSSSSQPPVFGQQPSQSAFGSGTTPNSSSAFQ). The segment at 1350–1475 (LFPTGSQPAP…KIKTAVRRRK (126 aa)) is (Microbial infection) Interacts with HIV-1 capsid protein p24 (CA). Tandem repeats lie at residues 1362–1363 (FG), 1374–1375 (FG), 1383–1384 (FG), 1397–1398 (FG), and 1417–1418 (FG). Polar residues-rich tracts occupy residues 1420–1431 (NSSTPAASAQPS) and 1438–1463 (FNQSPAAFTVGSNGKNVFSSSGTSFS). Residues 1420–1475 (NSSTPAASAQPSGSGGFPFNQSPAAFTVGSNGKNVFSSSGTSFSGRKIKTAVRRRK) form a disordered region. A phosphoserine mark is found at S1457, S1461, and S1463. Basic residues predominate over residues 1465 to 1475 (RKIKTAVRRRK).

It belongs to the NUP153 family. In terms of assembly, part of the nuclear pore complex (NPC). Interacts with TPR (via coiled coil region); the interaction is direct and provides a link between the core structure and the TPR-containing nuclear basket of the nuclear pore complex (NPC). Interacts with HIKESHI. Interacts with SENP2. Interacts with XPO5. Interacts with RAN; the interaction occurs in a GTP- and GDP-independent manner. Interacts with MCM3AP isoform GANP; this interaction is required for GANP localization at the nuclear pore complex. Interacts with MAPK1. As to quaternary structure, (Microbial infection) Interacts (via C-terminus) with HIV-1 capsid protein p24 (CA) (via N-terminus). (Microbial infection) Interacts with HIV-1 integrase; this interaction might play a role in nuclear import of HIV pre-integration complex. In terms of assembly, (Microbial infection) Interacts with hepatitis B virus capsid protein; this interaction probably plays a role in nuclear import of HBV genome. As to quaternary structure, (Microbial infection) Interacts with Epstein-barr virus BGLF4; this interaction allows BGLF4 nuclear entry. (Microbial infection) Interacts with HIV-2 virus protein vpx; this interaction might promote vpx nuclear entry. The cofactor is Zn(2+). Post-translationally, phosphorylated in interphase, hyperphosphorylated during mitosis. May play a role in the reversible disassembly of the nuclear pore complex during mitosis. Proteolytically degraded after poliovirus (PV) infection; degradation is partial and NCP- and TPR-binding domains withstand degradation. In terms of processing, O-glycosylated during cytokinesis at sites identical or close to phosphorylation sites, this interferes with the phosphorylation status.

It is found in the nucleus. It localises to the nucleus membrane. Its subcellular location is the nuclear pore complex. Component of the nuclear pore complex (NPC), a complex required for the trafficking across the nuclear envelope. Functions as a scaffolding element in the nuclear phase of the NPC essential for normal nucleocytoplasmic transport of proteins and mRNAs. Involved in the quality control and retention of unspliced mRNAs in the nucleus; in association with TPR, regulates the nuclear export of unspliced mRNA species bearing constitutive transport element (CTE) in a NXF1- and KHDRBS1-independent manner. Mediates TPR anchoring to the nuclear membrane at NPC. The repeat-containing domain may be involved in anchoring other components of the NPC to the pore membrane. Possible DNA-binding subunit of the nuclear pore complex (NPC). Functionally, (Microbial infection) Interacts with HIV-1 caspid protein P24 and thereby promotes the integration of the virus in the nucleus of non-dividing cells (in vitro). In terms of biological role, (Microbial infection) Binds HIV-2 protein vpx and thereby promotes the nuclear translocation of the lentiviral genome (in vitro). This Homo sapiens (Human) protein is Nuclear pore complex protein Nup153 (NUP153).